The chain runs to 397 residues: Phosphoglycerate kinase (397 aa).

Substrate-binding positions include 25-27 (DLN), R41, 64-67 (HLGR), R118, and R151. Residues K202, E324, and 350-353 (GGDT) each bind ATP.

It belongs to the phosphoglycerate kinase family. As to quaternary structure, monomer.

The protein localises to the cytoplasm. It catalyses the reaction (2R)-3-phosphoglycerate + ATP = (2R)-3-phospho-glyceroyl phosphate + ADP. It functions in the pathway carbohydrate degradation; glycolysis; pyruvate from D-glyceraldehyde 3-phosphate: step 2/5. The protein is Phosphoglycerate kinase of Acidovorax ebreus (strain TPSY) (Diaphorobacter sp. (strain TPSY)).